Reading from the N-terminus, the 387-residue chain is Patatin group J-1 (387 aa).

An N-terminal signal peptide occupies residues 1–23; sequence MATTKSFLILIVMILATTSSTFA. In terms of domain architecture, PNPLA spans 32 to 230; that stretch reads LSIDGGGIKG…TVGDPALLSL (199 aa). Positions 36–41 match the GXGXXG motif; the sequence is GGGIKG. Positions 75–79 match the GXSXG motif; it reads GTSTG. The Nucleophile role is filled by serine 77. N-linked (GlcNAc...) asparagine glycosylation is present at asparagine 115. The Proton acceptor role is filled by aspartate 216. The DGA/G signature appears at 216 to 218; that stretch reads DGG. The stretch at 322–385 forms a coiled coil; sequence ENALTGTTTE…NRKKLRANKA (64 aa).

The protein belongs to the patatin family. In terms of tissue distribution, tuber.

The protein localises to the vacuole. Probable lipolytic acyl hydrolase (LAH), an activity which is thought to be involved in the response of tubers to pathogens. The chain is Patatin group J-1 from Solanum tuberosum (Potato).